A 557-amino-acid chain; its full sequence is MNIVGQMKEQLKEEIRQAVGKAGLVAAEELPEVLLEVPREKAHGDYSTNIAMQLARIAKKPPRAIAEAIVEKFDAERVSVARIEVAGPGFINFYMDNRYLTAVVPAILQAGQAYGESNVGKGEKVQVEFVSANPTGNLHLGHARGAAVGDSLSNILAKAGFDVTREYYINDAGKQIYNLAKSVEARYFQALGTDMPLPEDGYYGDDIVEIGKKLADEYGDRFVHVDEEERLAFFREYGLRYELDKIKNDLAAFRVPFDVWYSETSLYESGKIDEALSTLRERGYIYEQDGATWFRSTAFGDDKDRVLIKQDGTYTYLLPDIAYHQDKLRRGFTKLINVWGADHHGYIPRMKAAIAALGYDPEALEVEIIQMVNLYQNGERVKMSKRTGKAVTMRELMEEVGVDAVRYFFAMRSGDTHLDFDMDLAVAQSNENPVYYVQYAHARVSSILRQAKEHQLSYEGDVDLHHLVETEKEIELLKALGDFPDVVAEAALKRMPHRVTAYAFDLASALHSFYNAEKVLDLDQIEKTKARLALVKAVQITLQNALALIGVSAPEQM.

Residues 132–142 carry the 'HIGH' region motif; sequence ANPTGNLHLGH.

It belongs to the class-I aminoacyl-tRNA synthetase family. As to quaternary structure, monomer.

Its subcellular location is the cytoplasm. It catalyses the reaction tRNA(Arg) + L-arginine + ATP = L-arginyl-tRNA(Arg) + AMP + diphosphate. The protein is Arginine--tRNA ligase of Geobacillus thermodenitrificans (strain NG80-2).